Reading from the N-terminus, the 152-residue chain is Lipoprotein signal peptidase (152 aa).

The next 2 membrane-spanning stretches (helical) occupy residues Asn-55–Met-75 and Leu-85–Phe-105. Catalysis depends on residues Asp-111 and Asp-129. A helical transmembrane segment spans residues Val-124–Leu-144.

Belongs to the peptidase A8 family.

The protein localises to the cell membrane. It carries out the reaction Release of signal peptides from bacterial membrane prolipoproteins. Hydrolyzes -Xaa-Yaa-Zaa-|-(S,diacylglyceryl)Cys-, in which Xaa is hydrophobic (preferably Leu), and Yaa (Ala or Ser) and Zaa (Gly or Ala) have small, neutral side chains.. The protein operates within protein modification; lipoprotein biosynthesis (signal peptide cleavage). Its function is as follows. This protein specifically catalyzes the removal of signal peptides from prolipoproteins. This Bacillus cereus (strain B4264) protein is Lipoprotein signal peptidase.